Here is a 507-residue protein sequence, read N- to C-terminus: Maturase K (507 aa).

This sequence belongs to the intron maturase 2 family. MatK subfamily.

The protein localises to the plastid. It localises to the chloroplast. In terms of biological role, usually encoded in the trnK tRNA gene intron. Probably assists in splicing its own and other chloroplast group II introns. This is Maturase K from Lens ervoides (Beaded lentil).